The chain runs to 358 residues: Phosphoserine aminotransferase (358 aa).

Arg41 serves as a coordination point for L-glutamate. Residues 75–76, Trp101, Thr150, Asp170, and Gln193 contribute to the pyridoxal 5'-phosphate site; that span reads AR. Lys194 bears the N6-(pyridoxal phosphate)lysine mark. Pyridoxal 5'-phosphate is bound at residue 235 to 236; sequence NT.

This sequence belongs to the class-V pyridoxal-phosphate-dependent aminotransferase family. SerC subfamily. As to quaternary structure, homodimer. The cofactor is pyridoxal 5'-phosphate.

Its subcellular location is the cytoplasm. It carries out the reaction O-phospho-L-serine + 2-oxoglutarate = 3-phosphooxypyruvate + L-glutamate. The catalysed reaction is 4-(phosphooxy)-L-threonine + 2-oxoglutarate = (R)-3-hydroxy-2-oxo-4-phosphooxybutanoate + L-glutamate. The protein operates within amino-acid biosynthesis; L-serine biosynthesis; L-serine from 3-phospho-D-glycerate: step 2/3. Its pathway is cofactor biosynthesis; pyridoxine 5'-phosphate biosynthesis; pyridoxine 5'-phosphate from D-erythrose 4-phosphate: step 3/5. Catalyzes the reversible conversion of 3-phosphohydroxypyruvate to phosphoserine and of 3-hydroxy-2-oxo-4-phosphonooxybutanoate to phosphohydroxythreonine. This Histophilus somni (strain 129Pt) (Haemophilus somnus) protein is Phosphoserine aminotransferase.